The chain runs to 75 residues: Translation initiation factor IF-1, chloroplastic (75 aa).

The S1-like domain maps to 1–72; it reads MKKQNLIHAE…TKGRIIYRLS (72 aa).

The protein belongs to the IF-1 family. Component of the 30S ribosomal translation pre-initiation complex which assembles on the 30S ribosome in the order IF-2 and IF-3, IF-1 and N-formylmethionyl-tRNA(fMet); mRNA recruitment can occur at any time during PIC assembly.

The protein resides in the plastid. Its subcellular location is the chloroplast. In terms of biological role, one of the essential components for the initiation of protein synthesis. Stabilizes the binding of IF-2 and IF-3 on the 30S subunit to which N-formylmethionyl-tRNA(fMet) subsequently binds. Helps modulate mRNA selection, yielding the 30S pre-initiation complex (PIC). Upon addition of the 50S ribosomal subunit IF-1, IF-2 and IF-3 are released leaving the mature 70S translation initiation complex. The chain is Translation initiation factor IF-1, chloroplastic from Pinus koraiensis (Korean pine).